Reading from the N-terminus, the 269-residue chain is Putative aga operon transcriptional repressor (269 aa).

In terms of domain architecture, HTH deoR-type spans 15–70 (TSERREQIIQRLRQQGSVQVNDLSALYGVSTVTIRNDLAFLEKQGIAVRAYGGALI). The segment at residues 32-51 (VQVNDLSALYGVSTVTIRND) is a DNA-binding region (H-T-H motif).

Its function is as follows. Probable repressor for the aga operon for N-acetyl galactosamine transport and metabolism. This chain is Putative aga operon transcriptional repressor (agaR), found in Escherichia coli O157:H7.